We begin with the raw amino-acid sequence, 397 residues long: Pentatricopeptide repeat-containing protein At1g80150, mitochondrial (397 aa).

The transit peptide at 1-81 directs the protein to the mitochondrion; sequence MLSLRHIRRF…FAFEDTVSRL (81 aa). 8 PPR repeats span residues 105–139, 140–170, 176–210, 211–245, 246–280, 281–315, 316–350, and 351–381; these read REGF…GCKR, SVKS…APSK, DAVS…GLTP, DVVT…GCKP, NLTT…QVEP, DSIT…GYKP, NLKI…KWYP, and NLDT…VHRR.

This sequence belongs to the PPR family. P subfamily.

It localises to the mitochondrion. The protein is Pentatricopeptide repeat-containing protein At1g80150, mitochondrial of Arabidopsis thaliana (Mouse-ear cress).